Here is a 492-residue protein sequence, read N- to C-terminus: N-succinylglutamate 5-semialdehyde dehydrogenase (492 aa).

220 to 225 (GSASTG) is a binding site for NAD(+). Active-site residues include Glu243 and Cys277.

It belongs to the aldehyde dehydrogenase family. AstD subfamily.

The enzyme catalyses N-succinyl-L-glutamate 5-semialdehyde + NAD(+) + H2O = N-succinyl-L-glutamate + NADH + 2 H(+). The protein operates within amino-acid degradation; L-arginine degradation via AST pathway; L-glutamate and succinate from L-arginine: step 4/5. Its function is as follows. Catalyzes the NAD-dependent reduction of succinylglutamate semialdehyde into succinylglutamate. The chain is N-succinylglutamate 5-semialdehyde dehydrogenase from Salmonella dublin (strain CT_02021853).